We begin with the raw amino-acid sequence, 486 residues long: Probable glycine dehydrogenase (decarboxylating) subunit 2 (486 aa).

Residues 1-26 are disordered; that stretch reads MLIFESSRPGRQARAQAPKPTAATND. Lysine 264 is subject to N6-(pyridoxal phosphate)lysine.

It belongs to the GcvP family. C-terminal subunit subfamily. The glycine cleavage system is composed of four proteins: P, T, L and H. In this organism, the P 'protein' is a heterodimer of two subunits. Pyridoxal 5'-phosphate is required as a cofactor.

It carries out the reaction N(6)-[(R)-lipoyl]-L-lysyl-[glycine-cleavage complex H protein] + glycine + H(+) = N(6)-[(R)-S(8)-aminomethyldihydrolipoyl]-L-lysyl-[glycine-cleavage complex H protein] + CO2. Its function is as follows. The glycine cleavage system catalyzes the degradation of glycine. The P protein binds the alpha-amino group of glycine through its pyridoxal phosphate cofactor; CO(2) is released and the remaining methylamine moiety is then transferred to the lipoamide cofactor of the H protein. The chain is Probable glycine dehydrogenase (decarboxylating) subunit 2 from Nitrosococcus oceani (strain ATCC 19707 / BCRC 17464 / JCM 30415 / NCIMB 11848 / C-107).